The chain runs to 179 residues: Large ribosomal subunit protein uL6 (179 aa).

The protein belongs to the universal ribosomal protein uL6 family. As to quaternary structure, part of the 50S ribosomal subunit.

Its function is as follows. This protein binds to the 23S rRNA, and is important in its secondary structure. It is located near the subunit interface in the base of the L7/L12 stalk, and near the tRNA binding site of the peptidyltransferase center. The protein is Large ribosomal subunit protein uL6 of Synechococcus sp. (strain RCC307).